The chain runs to 491 residues: Cobyric acid synthase (491 aa).

The GATase cobBQ-type domain occupies 253-429; it reads ARRVAVIRLP…WHGALEGDEL (177 aa). Cys334 serves as the catalytic Nucleophile. His421 is an active-site residue.

Belongs to the CobB/CobQ family. CobQ subfamily.

The protein operates within cofactor biosynthesis; adenosylcobalamin biosynthesis. Functionally, catalyzes amidations at positions B, D, E, and G on adenosylcobyrinic A,C-diamide. NH(2) groups are provided by glutamine, and one molecule of ATP is hydrogenolyzed for each amidation. This chain is Cobyric acid synthase, found in Mycolicibacterium gilvum (strain PYR-GCK) (Mycobacterium gilvum (strain PYR-GCK)).